The primary structure comprises 37 residues: Large ribosomal subunit protein bL36 (37 aa).

This sequence belongs to the bacterial ribosomal protein bL36 family.

The sequence is that of Large ribosomal subunit protein bL36 from Hydrogenobaculum sp. (strain Y04AAS1).